The chain runs to 367 residues: tRNA pseudouridine synthase D (367 aa).

Catalysis depends on Asp80, which acts as the Nucleophile. Residues 156-316 (GIPNWFGEQR…LKQERRALRL (161 aa)) enclose the TRUD domain.

It belongs to the pseudouridine synthase TruD family.

The catalysed reaction is uridine(13) in tRNA = pseudouridine(13) in tRNA. In terms of biological role, responsible for synthesis of pseudouridine from uracil-13 in transfer RNAs. This is tRNA pseudouridine synthase D from Xanthomonas campestris pv. campestris (strain B100).